The chain runs to 1339 residues: Tuberous sclerosis 2 protein homolog (1339 aa).

The residue at position 1036 (S1036) is a Phosphoserine. One can recognise a Rap-GAP domain in the interval 1109-1303 (ILANTNPSED…AERLRQLKRL (195 aa)).

In terms of assembly, interacts with tsc1.

It localises to the cytoplasm. The protein localises to the nucleus. Its function is as follows. Together with tsc1, required for uptake of various amino acids from the environment and for proper conjugation. Involved in induction of gene expression of permeases and genes required for meiosis upon nitrogen starvation. May act as a GTPase-activating protein (GAP) for the small GTPase rhb1. In Schizosaccharomyces pombe (strain 972 / ATCC 24843) (Fission yeast), this protein is Tuberous sclerosis 2 protein homolog (tsc2).